A 301-amino-acid chain; its full sequence is Acetyl-coenzyme A carboxylase carboxyl transferase subunit beta (301 aa).

Residues 25 to 294 enclose the CoA carboxyltransferase N-terminal domain; that stretch reads LWIKCPETGE…SAANDMNGGA (270 aa).

This sequence belongs to the AccD/PCCB family. Acetyl-CoA carboxylase is a heterohexamer composed of biotin carboxyl carrier protein (AccB), biotin carboxylase (AccC) and two subunits each of ACCase subunit alpha (AccA) and ACCase subunit beta (AccD).

It is found in the cytoplasm. The enzyme catalyses N(6)-carboxybiotinyl-L-lysyl-[protein] + acetyl-CoA = N(6)-biotinyl-L-lysyl-[protein] + malonyl-CoA. Its pathway is lipid metabolism; malonyl-CoA biosynthesis; malonyl-CoA from acetyl-CoA: step 1/1. In terms of biological role, component of the acetyl coenzyme A carboxylase (ACC) complex. Biotin carboxylase (BC) catalyzes the carboxylation of biotin on its carrier protein (BCCP) and then the CO(2) group is transferred by the transcarboxylase to acetyl-CoA to form malonyl-CoA. This chain is Acetyl-coenzyme A carboxylase carboxyl transferase subunit beta, found in Rhizobium etli (strain CIAT 652).